A 172-amino-acid polypeptide reads, in one-letter code: Lytic chitin monooxygenase (172 aa).

The first 30 residues, 1-30 (MHAGRKTAVLIGAALAPVIAVSLPAASASA), serve as a signal peptide directing secretion. Cu cation contacts are provided by H31 and H106. Residues 31 to 168 (HGYISNPPSR…DNAFYACIDV (138 aa)) enclose the Chitin-binding type-4 domain.

It depends on Cu(2+) as a cofactor.

Its subcellular location is the secreted. The enzyme catalyses [(1-&gt;4)-N-acetyl-beta-D-glucosaminyl]n+m + reduced acceptor + O2 = [(1-&gt;4)-N-acetyl-beta-D-glucosaminyl]m-1-(1-&gt;4)-2-(acetylamino)-2-deoxy-D-glucono-1,5-lactone + [(1-&gt;4)-N-acetyl-beta-D-glucosaminyl]n + acceptor + H2O.. The protein operates within glycan degradation; chitin degradation. Its function is as follows. Involved in chitin degradation. Catalyzes the oxidative cleavage of glycosidic bonds in chitin via a copper-dependent mechanism, leading to oxidized chitooligomers with degrees of polymerization of 4-6. Is not active on cellulose. This chain is Lytic chitin monooxygenase, found in Streptomyces ambofaciens (strain ATCC 23877 / 3486 / DSM 40053 / JCM 4204 / NBRC 12836 / NRRL B-2516).